The sequence spans 445 residues: Glutamate-1-semialdehyde 2,1-aminomutase (445 aa).

Lys-281 is modified (N6-(pyridoxal phosphate)lysine).

The protein belongs to the class-III pyridoxal-phosphate-dependent aminotransferase family. HemL subfamily. As to quaternary structure, homodimer. Pyridoxal 5'-phosphate serves as cofactor.

Its subcellular location is the cytoplasm. It catalyses the reaction (S)-4-amino-5-oxopentanoate = 5-aminolevulinate. It functions in the pathway porphyrin-containing compound metabolism; protoporphyrin-IX biosynthesis; 5-aminolevulinate from L-glutamyl-tRNA(Glu): step 2/2. This is Glutamate-1-semialdehyde 2,1-aminomutase from Nocardioides sp. (strain ATCC BAA-499 / JS614).